The primary structure comprises 188 residues: dCTP deaminase (188 aa).

DCTP contacts are provided by residues 111 to 116, 135 to 137, glutamine 156, tyrosine 170, and glutamine 180; these read KSTYAR and TLE. The active-site Proton donor/acceptor is the glutamate 137.

The protein belongs to the dCTP deaminase family. As to quaternary structure, homotrimer.

The enzyme catalyses dCTP + H2O + H(+) = dUTP + NH4(+). It participates in pyrimidine metabolism; dUMP biosynthesis; dUMP from dCTP (dUTP route): step 1/2. In terms of biological role, catalyzes the deamination of dCTP to dUTP. The sequence is that of dCTP deaminase from Azotobacter vinelandii (strain DJ / ATCC BAA-1303).